The following is a 752-amino-acid chain: Photosystem I P700 chlorophyll a apoprotein A1 (752 aa).

The next 8 helical transmembrane spans lie at 73–96 (IFSA…FHGA), 159–182 (LYVT…FHYH), 198–222 (LNHH…HVSA), 294–312 (IAHH…GHQY), 349–372 (WHAQ…HHMY), 388–414 (LCIF…IFMV), 436–458 (AIIS…LYIH), and 533–551 (FLIH…LILL). Positions 575 and 584 each coordinate [4Fe-4S] cluster. A run of 2 helical transmembrane segments spans residues 591-612 (HVFL…HFSW) and 666-688 (LSAY…MFLF). H677 is a chlorophyll a' binding site. The chlorophyll a site is built by M685 and Y693. Position 694 (W694) interacts with phylloquinone. Residues 726–746 (AVGVAHYLLGGIATTWAFFHA) traverse the membrane as a helical segment.

Belongs to the PsaA/PsaB family. In terms of assembly, the PsaA/B heterodimer binds the P700 chlorophyll special pair and subsequent electron acceptors. PSI consists of a core antenna complex that captures photons, and an electron transfer chain that converts photonic excitation into a charge separation. The cyanobacterial PSI reaction center is composed of one copy each of PsaA,B,C,D,E,F,I,J,K,L,M and X, and forms trimeric complexes. Requires PSI electron transfer chain: 5 chlorophyll a, 1 chlorophyll a', 2 phylloquinones and 3 4Fe-4S clusters. PSI core antenna: 90 chlorophyll a, 22 carotenoids, 3 phospholipids and 1 galactolipid. P700 is a chlorophyll a/chlorophyll a' dimer, A0 is one or more chlorophyll a, A1 is one or both phylloquinones and FX is a shared 4Fe-4S iron-sulfur center. as cofactor.

The protein resides in the cellular thylakoid membrane. It carries out the reaction reduced [plastocyanin] + hnu + oxidized [2Fe-2S]-[ferredoxin] = oxidized [plastocyanin] + reduced [2Fe-2S]-[ferredoxin]. Functionally, psaA and PsaB bind P700, the primary electron donor of photosystem I (PSI), as well as the electron acceptors A0, A1 and FX. PSI is a plastocyanin/cytochrome c6-ferredoxin oxidoreductase, converting photonic excitation into a charge separation, which transfers an electron from the donor P700 chlorophyll pair to the spectroscopically characterized acceptors A0, A1, FX, FA and FB in turn. Oxidized P700 is reduced on the lumenal side of the thylakoid membrane by plastocyanin or cytochrome c6. This is Photosystem I P700 chlorophyll a apoprotein A1 from Nostoc punctiforme (strain ATCC 29133 / PCC 73102).